The following is a 291-amino-acid chain: Pentonolactonase XacC (291 aa).

A divalent metal cation contacts are provided by Glu15, Asn141, and Asp191. The Proton donor/acceptor role is filled by Asp191.

This sequence belongs to the SMP-30/CGR1 family. As to quaternary structure, monomer. Requires a divalent metal cation as cofactor.

The enzyme catalyses L-arabinono-1,4-lactone + H2O = L-arabinonate + H(+). It catalyses the reaction D-xylono-1,4-lactone + H2O = D-xylonate + H(+). Its pathway is carbohydrate degradation. In terms of biological role, pentonolactonase involved in D-arabinose and D-xylose catabolism. Catalyzes the hydrolysis of both L-arabino-gamma-lactone and D-xylono-gamma-lactone to the corresponding acids. Can also hydrolyze D-galactono-gamma-lactone and D-glucono-delta-lactone. The protein is Pentonolactonase XacC of Haloferax volcanii (strain ATCC 29605 / DSM 3757 / JCM 8879 / NBRC 14742 / NCIMB 2012 / VKM B-1768 / DS2) (Halobacterium volcanii).